Consider the following 244-residue polypeptide: Probable ABC transporter ATP-binding protein p29 (244 aa).

An ABC transporter domain is found at 6–241; sequence LVFDQVSLRY…KLTKQKLMQI (236 aa). Residue 38–45 coordinates ATP; it reads GKSGVGKT.

Belongs to the ABC transporter superfamily.

In terms of biological role, part of a high-affinity transport system. The sequence is that of Probable ABC transporter ATP-binding protein p29 (p29) from Mycoplasma pneumoniae (strain ATCC 29342 / M129 / Subtype 1) (Mycoplasmoides pneumoniae).